Consider the following 841-residue polypeptide: Rhomboid-like protease 5 (841 aa).

Positions 1–10 are enriched in low complexity; sequence MSSKGGSSRL. The disordered stretch occupies residues 1-289; sequence MSSKGGSSRL…GGDGGPRRHS (289 aa). The span at 11–51 shows a compositional bias: basic and acidic residues; that stretch reads GSKDLKKMTSRTERELRDSGRVRGEVERVEKRLRATAKVKE. A compositionally biased stretch (low complexity) spans 95 to 132; sequence LRPASSSPRLASSSRPTESTLPSSSSRALQGASSSSSS. Basic and acidic residues-rich tracts occupy residues 154-163, 209-230, and 243-275; these read LRQEKKRLPE, RTAEKLEEGTASHRDGSRRGSV, and SSHEFESSPQREERMQPQETGRRELSSEPRSGD. Transmembrane regions (helical) follow at residues 323–343, 464–484, 492–512, 526–546, 571–590, and 673–693; these read FLMIFLTSSVLFFVFLQELVL, MFRVVWGMFLHGGWMHLLLNV, WILEPAWGFLRTLSLWIVGGV, VTVGSSGAFYGLLGALVPFSI, FGNMVGVQGVDNNAHLGGLI, and FAAAVGLVTFWSVLWLYLLVP. Ser-531 (nucleophile) is an active-site residue. His-585 is a catalytic residue.

Belongs to the peptidase S54 family.

It localises to the membrane. The enzyme catalyses Cleaves type-1 transmembrane domains using a catalytic dyad composed of serine and histidine that are contributed by different transmembrane domains.. Serine protease involved in intramembrane proteolysis. Cleaves microneme adhesins, such as MIC2. This step is essential for efficient invasion of host cells. Catalyzes intramembrane proteolysis of AMA1. In Toxoplasma gondii, this protein is Rhomboid-like protease 5 (ROM5).